A 292-amino-acid chain; its full sequence is Elongation factor Ts (292 aa).

Residues 79–82 (TDFV) are involved in Mg(2+) ion dislocation from EF-Tu.

This sequence belongs to the EF-Ts family.

The protein resides in the cytoplasm. In terms of biological role, associates with the EF-Tu.GDP complex and induces the exchange of GDP to GTP. It remains bound to the aminoacyl-tRNA.EF-Tu.GTP complex up to the GTP hydrolysis stage on the ribosome. The protein is Elongation factor Ts of Xanthomonas campestris pv. campestris (strain ATCC 33913 / DSM 3586 / NCPPB 528 / LMG 568 / P 25).